We begin with the raw amino-acid sequence, 205 residues long: Nitrophorin-4 (205 aa).

Positions Met1–Gly21 are cleaved as a signal peptide. 2 cysteine pairs are disulfide-bonded: Cys23/Cys143 and Cys62/Cys192. His80 contributes to the heme binding site.

Belongs to the calycin superfamily. Nitrophorin family. Heme b is required as a cofactor. As to expression, salivary gland (at protein level).

The protein localises to the secreted. It carries out the reaction 3 nitrite + 2 H(+) = 2 nitric oxide + nitrate + H2O. In terms of biological role, heme-based protein that delivers nitric oxide gas (NO) to the victim while feeding, resulting in vasodilation and inhibition of platelet aggregation. Reversibly binds nitric oxide (NO). Also binds tightly to histamine, which is released by the host to induce wound healing. NO release is pH dependent and linked to loop dynamics. In Rhodnius prolixus (Triatomid bug), this protein is Nitrophorin-4.